Here is a 754-residue protein sequence, read N- to C-terminus: Pentatricopeptide repeat-containing protein At3g53700, chloroplastic (754 aa).

A chloroplast-targeting transit peptide spans 1–72 (MAFSSCLKFY…DSAALRLFNL (72 aa)). PPR repeat units follow at residues 82-116 (EPALYEEILLRLGRSGSFDDMKKILEDMKSSRCEM), 117-152 (GTSTFLILIESYAQFELQDEILSVVDWMIDEFGLKP), 153-187 (DTHFYNRMLNLLVDGNSLKLVEISHAKMSVWGIKP), 188-222 (DVSTFNVLIKALCRAHQLRPAILMLEDMPSYGLVP), 223-257 (DEKTFTTVMQGYIEEGDLDGALRIREQMVEFGCSW), 258-288 (SNVSVNVIVHGFCKEGRVEDALNFIQEMSNQ), 294-328 (DQYTFNTLVNGLCKAGHVKHAIEIMDVMLQEGYDP), 329-363 (DVYTYNSVISGLCKLGEVKEAVEVLDQMITRDCSP), 364-398 (NTVTYNTLISTLCKENQVEEATELARVLTSKGILP), 399-433 (DVCTFNSLIQGLCLTRNHRVAMELFEEMRSKGCEP), 434-468 (DEFTYNMLIDSLCSKGKLDEALNMLKQMELSGCAR), 469-503 (SVITYNTLIDGFCKANKTREAEEIFDEMEVHGVSR), 504-538 (NSVTYNTLIDGLCKSRRVEDAAQLMDQMIMEGQKP), 539-573 (DKYTYNSLLTHFCRGGDIKKAADIVQAMTSNGCEP), 574-608 (DIVTYGTLISGLCKAGRVEVASKLLRSIQMKGINL), 609-643 (TPHAYNPVIQGLFRKRKTTEAINLFREMLEQNEAP), and 645-680 (DAVSYRIVFRGLCNGGGPIREAVDFLVELLEKGFVP).

It belongs to the PPR family. P subfamily.

The protein localises to the plastid. The protein resides in the chloroplast. Functionally, may be involved in female gametophyte development. This Arabidopsis thaliana (Mouse-ear cress) protein is Pentatricopeptide repeat-containing protein At3g53700, chloroplastic (MEE40).